The following is a 267-amino-acid chain: Probable aquaporin TIP3-2 (267 aa).

Met1 bears the N-acetylmethionine mark. The residue at position 2 (Ala2) is an N-acetylalanine; in Probable aquaporin TIP3-2, N-terminally processed. Residues 2–26 (ATSARRAYGFGRADEATHPDSIRAT) lie on the Cytoplasmic side of the membrane. The helical transmembrane segment at 27–47 (LAEFLSTFVFVFAGEGSILAL) threads the bilayer. At 48 to 66 (DKLYWDTAAHTGTNTPGGL) the chain is on the vacuolar side. A helical membrane pass occupies residues 67–87 (VLVALAHALALFAAVSAAINV). Residues 88-110 (SGGHVNPAVTFAALIGGRISVIR) lie on the Cytoplasmic side of the membrane. An NPA 1 motif is present at residues 93 to 95 (NPA). The helical transmembrane segment at 111 to 131 (AIYYWVAQLIGAILACLLLRL) threads the bilayer. At 132–151 (ATNGLRPVGFHVASGVSELH) the chain is on the vacuolar side. The helical transmembrane segment at 152 to 172 (GLLMEIILTFALVYVVYSTAI) threads the bilayer. Over 173 to 178 (DPKRGS) the chain is Cytoplasmic. Residues 179-199 (IGIIAPLAIGLIVGANILVGG) form a helical membrane-spanning segment. Residues 200-226 (PFDGASMNPARAFGPALVGWRWSNHWI) lie on the Vacuolar side of the membrane. The NPA 2 signature appears at 207 to 209 (NPA). The chain crosses the membrane as a helical span at residues 227–247 (YWVGPFIGGALAALIYEYMII). Over 248 to 267 (PSVNEPPHHSTHQPLAPEDY) the chain is Cytoplasmic.

The protein belongs to the MIP/aquaporin (TC 1.A.8) family. TIP (TC 1.A.8.10) subfamily. In terms of tissue distribution, predominantly expressed in developing seeds. Also expressed in rosette leaves.

It localises to the vacuole membrane. Aquaporins facilitate the transport of water and small neutral solutes across cell membranes. The polypeptide is Probable aquaporin TIP3-2 (TIP3-2) (Arabidopsis thaliana (Mouse-ear cress)).